The sequence spans 686 residues: X-linked interleukin-1 receptor accessory protein-like 2 (686 aa).

An N-terminal signal peptide occupies residues 1 to 16 (MKLPLLLALVVCSAVS). The Extracellular segment spans residues 17–354 (TNLKMVSKRN…LLRKKDLIYK (338 aa)). The 101-residue stretch at 32–132 (IDWSVDLKTY…YCMKVSMSLT (101 aa)) folds into the Ig-like C2-type 1 domain. Residues C53 and C116 are joined by a disulfide bond. 5 N-linked (GlcNAc...) asparagine glycosylation sites follow: N63, N120, N136, N211, and N328. 2 Ig-like C2-type domains span residues 141 to 232 (CYNS…LKVT) and 239 to 347 (PPKP…VLLR). 2 cysteine pairs are disulfide-bonded: C162/C214 and C265/C331. The helical transmembrane segment at 355 to 375 (IELAGGLGAIFLLLILLLVVY) threads the bilayer. The Cytoplasmic segment spans residues 376-686 (KCYNIELMLF…KELSFTSDIW (311 aa)). Residues 400–556 (KEYDAYLSYT…KFWKHLVYEM (157 aa)) form the TIR domain. E488 is a catalytic residue.

Belongs to the interleukin-1 receptor family. As to expression, detected in fetal brain after day 12.5, in particular in parts of the diencephalon and in the basal plate of the spinal cord. In postnatal brain detected in cerebral cortex, olfactory bulb, in the CA1 region of the hippocampus and in Purkinje cells of the Xth cerebellar lobule.

It is found in the membrane. It catalyses the reaction NAD(+) + H2O = ADP-D-ribose + nicotinamide + H(+). The polypeptide is X-linked interleukin-1 receptor accessory protein-like 2 (Il1rapl2) (Mus musculus (Mouse)).